Consider the following 127-residue polypeptide: MHQQYYNKPLHKLENNIDVTNGLINQRRFDPRKVDVMARKGTIERWILNASLPVGFTIQGAKFVVESQGEHQLQAEELAWKDTVWVKNKTQILVKFDQASSGNYPFLFGVSNLMLEDMGCLGVLMVQ.

This is an uncharacterized protein from Haemophilus influenzae (strain ATCC 51907 / DSM 11121 / KW20 / Rd).